The sequence spans 1086 residues: Isoleucine--tRNA ligase (1086 aa).

The 'HIGH' region signature appears at 53–63 (PFANGLPHYGH). The short motif at 624–628 (KLSKR) is the 'KMSKS' region element. Lysine 627 is an ATP binding site.

This sequence belongs to the class-I aminoacyl-tRNA synthetase family. IleS type 2 subfamily. Monomer. It depends on Zn(2+) as a cofactor.

Its subcellular location is the cytoplasm. It carries out the reaction tRNA(Ile) + L-isoleucine + ATP = L-isoleucyl-tRNA(Ile) + AMP + diphosphate. Its function is as follows. Catalyzes the attachment of isoleucine to tRNA(Ile). As IleRS can inadvertently accommodate and process structurally similar amino acids such as valine, to avoid such errors it has two additional distinct tRNA(Ile)-dependent editing activities. One activity is designated as 'pretransfer' editing and involves the hydrolysis of activated Val-AMP. The other activity is designated 'posttransfer' editing and involves deacylation of mischarged Val-tRNA(Ile). The polypeptide is Isoleucine--tRNA ligase (Rickettsia typhi (strain ATCC VR-144 / Wilmington)).